The primary structure comprises 592 residues: Protein phosphatase EYA1 (592 aa).

Disordered regions lie at residues 1-95 and 240-320; these read MEMQ…RPYP and MTSS…PDSD. Positions 8–26 are enriched in low complexity; the sequence is SPHSRLSGSSESPSGPKLG. Positions 28-63 are enriched in polar residues; the sequence is SHINSNSMTPNGTEVKTEPMSSSETASTTADGSLNN. Composition is skewed to low complexity over residues 64–75 and 241–253; these read FSGSAIGSSSFS and TSSN…PSTN. Residues 254–287 are compositionally biased toward polar residues; it reads ATYQLQEPPSGITSQAVTDPTAEYSTIHSPSTPI. Basic and acidic residues predominate over residues 288–303; that stretch reads KDSDSDRLRRGSDGKS. The active-site Nucleophile is D328. Residues D328, D330, and D556 each coordinate Mg(2+). D330 functions as the Proton donor in the catalytic mechanism.

The protein belongs to the HAD-like hydrolase superfamily. EYA family. As to quaternary structure, probably interacts with SIX2, SIX4 and SIX5. Interacts with H2AX in response to DNA damage. Interacts with SIX3; promotes EYA1 translocation to the nucleus. Requires Mg(2+) as cofactor. In terms of processing, sumoylated with SUMO1. In terms of tissue distribution, in the embryo, highly expressed in kidney with lower levels in brain. Weakly expressed in lung. In the adult, highly expressed in heart and skeletal muscle. Weakly expressed in brain and liver. No expression in eye or kidney.

Its subcellular location is the cytoplasm. The protein localises to the nucleus. It catalyses the reaction O-phospho-L-tyrosyl-[protein] + H2O = L-tyrosyl-[protein] + phosphate. The enzyme catalyses O-phospho-L-seryl-[protein] + H2O = L-seryl-[protein] + phosphate. The catalysed reaction is O-phospho-L-threonyl-[protein] + H2O = L-threonyl-[protein] + phosphate. In terms of biological role, functions both as protein phosphatase and as transcriptional coactivator for SIX1, and probably also for SIX2, SIX4 and SIX5. Tyrosine phosphatase that dephosphorylates 'Tyr-142' of histone H2AX (H2AXY142ph) and promotes efficient DNA repair via the recruitment of DNA repair complexes containing MDC1. 'Tyr-142' phosphorylation of histone H2AX plays a central role in DNA repair and acts as a mark that distinguishes between apoptotic and repair responses to genotoxic stress. Its function as histone phosphatase may contribute to its function in transcription regulation during organogenesis. Also has phosphatase activity with proteins phosphorylated on Ser and Thr residues (in vitro). Required for normal embryonic development of the craniofacial and trunk skeleton, kidneys and ears. Together with SIX1, it plays an important role in hypaxial muscle development; in this it is functionally redundant with EYA2. This chain is Protein phosphatase EYA1 (EYA1), found in Homo sapiens (Human).